The following is a 285-amino-acid chain: Shikimate dehydrogenase (NADP(+)) (285 aa).

Residues 22-24 (SMS) and T69 contribute to the shikimate site. The active-site Proton acceptor is K73. D85 is an NADP(+) binding site. 2 residues coordinate shikimate: N94 and D110. NADP(+) is bound by residues 136–140 (GAGGA), 160–165 (NRTVAR), and M225. Shikimate is bound at residue Y227. G248 lines the NADP(+) pocket.

It belongs to the shikimate dehydrogenase family. Homodimer.

The enzyme catalyses shikimate + NADP(+) = 3-dehydroshikimate + NADPH + H(+). It functions in the pathway metabolic intermediate biosynthesis; chorismate biosynthesis; chorismate from D-erythrose 4-phosphate and phosphoenolpyruvate: step 4/7. Involved in the biosynthesis of the chorismate, which leads to the biosynthesis of aromatic amino acids. Catalyzes the reversible NADPH linked reduction of 3-dehydroshikimate (DHSA) to yield shikimate (SA). The protein is Shikimate dehydrogenase (NADP(+)) of Caulobacter vibrioides (strain ATCC 19089 / CIP 103742 / CB 15) (Caulobacter crescentus).